We begin with the raw amino-acid sequence, 243 residues long: MIREHFEFRQTITTILADDRGHIEAAKSGMLAARREVERQIAGDPYFSATLEPYTPNNPANVPASMARAAAEAGVGPMAAVAGAIARAGVEAMAGAGAAFGLVDNGGDIALVSNREVKIGIYAGASPLSGRFAFLIPPGEEILGICTSSATVGPSISFGTADAVTVFSPDVAAADAWATAICNRITADDTSVLDDLPKTGVLGVLAVIGDAVVRWGDLPPIVRARVDERLITAGSDWQYYGRS.

The protein belongs to the UPF0280 family.

The sequence is that of UPF0280 protein Memar_1519 from Methanoculleus marisnigri (strain ATCC 35101 / DSM 1498 / JR1).